Reading from the N-terminus, the 693-residue chain is Follicle-stimulating hormone receptor (693 aa).

An N-terminal signal peptide occupies residues 1–18 (MFLVFTCSLILLASCSSC). 2 disulfide bridges follow: cysteine 18–cysteine 25 and cysteine 23–cysteine 32. Positions 19 to 46 (QHHTCHCAGRIFICQESKVVQLPRDIPT) constitute an LRRNT domain. Residues 19–366 (QHHTCHCAGR…EDIMGYTILR (348 aa)) lie on the Extracellular side of the membrane. N-linked (GlcNAc...) asparagine glycosylation is present at asparagine 47. 9 LRR repeats span residues 49 to 72 (TELR…LLDL), 73 to 97 (EKIE…LPKL), 98 to 118 (HEIR…AFQH), 119 to 143 (LPSL…KVHS), 144 to 169 (FQKV…MGLS), 170 to 192 (SESV…AFNG), 193 to 216 (TYLD…VFQG), 217 to 240 (ANGP…GLEL), and 241 to 259 (IKKL…PDLS). N-linked (GlcNAc...) asparagine glycans are attached at residues asparagine 191 and asparagine 199. Asparagine 268 carries an N-linked (GlcNAc...) asparagine glycan. 4 disulfides stabilise this stretch: cysteine 275–cysteine 346, cysteine 276–cysteine 292, cysteine 276–cysteine 356, and cysteine 292–cysteine 338. Residues 367 to 387 (VLIWFISILAITGNIVVLIIL) form a helical membrane-spanning segment. The Cytoplasmic portion of the chain corresponds to 388-398 (ISSQYKLTVPR). A helical transmembrane segment spans residues 399 to 421 (FLMCNLAFADLCIGIYLLFIASV). Residues 422 to 443 (DIQTKSQYYNYAIDWQTGAGCN) are Extracellular-facing. Cysteine 442 and cysteine 517 form a disulfide bridge. The chain crosses the membrane as a helical span at residues 444–465 (AAGFFTVFASELSVYTLTVITL). The Cytoplasmic segment spans residues 466 to 485 (ERWHTITYAMQLDRKVRFRH). Residues 486 to 508 (AVIIMIFGWMFAFTVALLPIFGV) traverse the membrane as a helical segment. Residues 509–528 (SSYMKVSICLPMDIETPFSQ) lie on the Extracellular side of the membrane. Residues 529–550 (AYVIFLLVLNVLAFVIICACYI) form a helical membrane-spanning segment. Over 551–573 (CIYFTVRNPNVISSNSDTKIAKR) the chain is Cytoplasmic. Residues 574–597 (MAILIFTDFLCMAPISFFAISASL) traverse the membrane as a helical segment. Residues 598–608 (KVPLITVSKSK) lie on the Extracellular side of the membrane. Residues 609–630 (ILLVLFYPINSCANPFLYAIFT) form a helical membrane-spanning segment. The Cytoplasmic portion of the chain corresponds to 631–693 (KTFRRDFFIL…YSLVPLNHLN (63 aa)).

The protein belongs to the G-protein coupled receptor 1 family. FSH/LSH/TSH subfamily. As to quaternary structure, homotrimer. Functions as a homotrimer binding the FSH hormone heterodimer composed of CGA and FSHB.

The protein localises to the cell membrane. Functionally, g protein-coupled receptor for follitropin, the follicle-stimulating hormone. Through cAMP production activates the downstream PI3K-AKT and ERK1/ERK2 signaling pathways. The polypeptide is Follicle-stimulating hormone receptor (FSHR) (Cairina moschata (Muscovy duck)).